We begin with the raw amino-acid sequence, 467 residues long: Glutamate--tRNA ligase (467 aa).

The 'HIGH' region signature appears at 9–19 (PSPTGFLHIGG). Positions 241–245 (KLSKR) match the 'KMSKS' region motif. K244 is an ATP binding site.

Belongs to the class-I aminoacyl-tRNA synthetase family. Glutamate--tRNA ligase type 1 subfamily. As to quaternary structure, monomer.

The protein localises to the cytoplasm. It catalyses the reaction tRNA(Glu) + L-glutamate + ATP = L-glutamyl-tRNA(Glu) + AMP + diphosphate. Functionally, catalyzes the attachment of glutamate to tRNA(Glu) in a two-step reaction: glutamate is first activated by ATP to form Glu-AMP and then transferred to the acceptor end of tRNA(Glu). This Methylobacillus flagellatus (strain ATCC 51484 / DSM 6875 / VKM B-1610 / KT) protein is Glutamate--tRNA ligase.